Here is a 684-residue protein sequence, read N- to C-terminus: Leishmanolysin-like peptidase (684 aa).

Residue His-257 participates in Zn(2+) binding. Glu-258 is an active-site residue. 2 residues coordinate Zn(2+): His-261 and His-364.

The protein belongs to the peptidase M8 family. Requires Zn(2+) as cofactor.

The protein localises to the cytoplasm. Its function is as follows. Essential for the coordination of mitotic progression, and also plays a role in cell migration. The chain is Leishmanolysin-like peptidase from Drosophila pseudoobscura pseudoobscura (Fruit fly).